We begin with the raw amino-acid sequence, 1085 residues long: KN motif and ankyrin repeat domain-containing protein 2 (1085 aa).

Over residues K136–R145 the composition is skewed to basic and acidic residues. The segment at K136–T192 is disordered. 2 stretches are compositionally biased toward polar residues: residues N148–R171 and T179–V189. Residues L196–Q216 adopt a coiled-coil conformation. The disordered stretch occupies residues N273–D295. Polar residues predominate over residues A281 to D295. The stretch at V356–E383 forms a coiled coil. Disordered stretches follow at residues R557 to Q736, T752 to Q791, and T798 to L817. Over residues S589–A600 the composition is skewed to acidic residues. The span at S601–P611 shows a compositional bias: basic and acidic residues. The span at A614–H648 shows a compositional bias: polar residues. The span at T649–H668 shows a compositional bias: low complexity. Composition is skewed to polar residues over residues N706 to Q736 and S760 to S788. The segment covering T798–T810 has biased composition (low complexity). 5 ANK repeats span residues N895–K925, A929–A962, A967–L996, D1000–L1030, and D1034–P1063. Positions P1064–K1085 are disordered. The span at K1070–K1085 shows a compositional bias: low complexity.

The protein localises to the cytoplasm. The protein resides in the mitochondrion. May be involved in different biological processes including transcription and apoptosis by sequestering specific proteins outside of the nucleus. Involved in actin stress fibers formation probably through its interaction with ARHGDIA and the regulation of the Rho signaling pathway. May thereby play a role in cell adhesion and migration, regulating for instance podocytes migration during development of the kidney. This Danio rerio (Zebrafish) protein is KN motif and ankyrin repeat domain-containing protein 2 (kank2).